The primary structure comprises 311 residues: Pseudouridine-5'-phosphate glycosidase (311 aa).

E32 functions as the Proton donor in the catalytic mechanism. Substrate is bound by residues K96 and V116. D148 serves as a coordination point for Mn(2+). 150–152 (SAD) is a binding site for substrate. Residue K169 is the Nucleophile of the active site.

Belongs to the pseudouridine-5'-phosphate glycosidase family. In terms of assembly, homotrimer. Mn(2+) is required as a cofactor.

The enzyme catalyses D-ribose 5-phosphate + uracil = psi-UMP + H2O. In terms of biological role, catalyzes the reversible cleavage of pseudouridine 5'-phosphate (PsiMP) to ribose 5-phosphate and uracil. Functions biologically in the cleavage direction, as part of a pseudouridine degradation pathway. The sequence is that of Pseudouridine-5'-phosphate glycosidase from Roseiflexus sp. (strain RS-1).